Consider the following 196-residue polypeptide: Large ribosomal subunit protein uL18 (196 aa).

This sequence belongs to the universal ribosomal protein uL18 family. Part of the 50S ribosomal subunit. Contacts the 5S and 23S rRNAs.

In terms of biological role, this is one of the proteins that bind and probably mediate the attachment of the 5S RNA into the large ribosomal subunit, where it forms part of the central protuberance. This chain is Large ribosomal subunit protein uL18, found in Sulfurisphaera tokodaii (strain DSM 16993 / JCM 10545 / NBRC 100140 / 7) (Sulfolobus tokodaii).